The chain runs to 573 residues: Isocitrate dehydrogenase kinase/phosphatase (573 aa).

ATP-binding positions include 318–324 (APGVRGM) and Lys339. The active site involves Asp374.

Belongs to the AceK family.

The protein resides in the cytoplasm. The catalysed reaction is L-seryl-[isocitrate dehydrogenase] + ATP = O-phospho-L-seryl-[isocitrate dehydrogenase] + ADP + H(+). In terms of biological role, bifunctional enzyme which can phosphorylate or dephosphorylate isocitrate dehydrogenase (IDH) on a specific serine residue. This is a regulatory mechanism which enables bacteria to bypass the Krebs cycle via the glyoxylate shunt in response to the source of carbon. When bacteria are grown on glucose, IDH is fully active and unphosphorylated, but when grown on acetate or ethanol, the activity of IDH declines drastically concomitant with its phosphorylation. The chain is Isocitrate dehydrogenase kinase/phosphatase from Stutzerimonas stutzeri (strain A1501) (Pseudomonas stutzeri).